The following is a 674-amino-acid chain: L-type lectin-domain containing receptor kinase IV.3 (674 aa).

The signal sequence occupies residues 1–22; that stretch reads MFFKLFTIFFFFIILLSKPLNS. Residues asparagine 21, asparagine 28, asparagine 40, asparagine 81, asparagine 136, and asparagine 188 are each glycosylated (N-linked (GlcNAc...) asparagine). Topologically, residues 23–296 are extracellular; that stretch reads SSQSLNFTYN…TSLQRFYKNR (274 aa). The tract at residues 26 to 263 is legume-lectin like; that stretch reads SLNFTYNSFH…SEHFVFGWSF (238 aa). Residues 297-317 traverse the membrane as a helical segment; the sequence is MPLFSLLLIPVLFVVSLIFLV. Over 318–674 the chain is Cytoplasmic; the sequence is RFIVRRRRKF…IAYSIVSGGR (357 aa). The Protein kinase domain occupies 355 to 632; it reads FKDKDLLGSG…LQYLRGDATL (278 aa). ATP is bound by residues 361 to 369 and lysine 384; that span reads LGSGGFGRV. Aspartate 480 acts as the Proton acceptor in catalysis.

In the C-terminal section; belongs to the protein kinase superfamily. Ser/Thr protein kinase family. The protein in the N-terminal section; belongs to the leguminous lectin family.

The protein resides in the cell membrane. The enzyme catalyses L-seryl-[protein] + ATP = O-phospho-L-seryl-[protein] + ADP + H(+). The catalysed reaction is L-threonyl-[protein] + ATP = O-phospho-L-threonyl-[protein] + ADP + H(+). The protein is L-type lectin-domain containing receptor kinase IV.3 (LECRK43) of Arabidopsis thaliana (Mouse-ear cress).